Here is a 494-residue protein sequence, read N- to C-terminus: NADH-quinone oxidoreductase subunit M (494 aa).

The next 14 membrane-spanning stretches (helical) occupy residues 5–25, 36–58, 90–110, 119–139, 140–160, 173–193, 206–226, 252–272, 281–301, 318–338, 339–359, 376–396, 412–432, and 459–479; these read PIIS…LLFI, IYVA…YILI, IAIF…IGSI, EYLV…TAVN, LLLF…IIGV, FFLY…YIYS, LTEN…FIAF, VILA…VLLP, FAIY…LVAL, MGYV…GAIF, QMLS…TLYE, MPVL…LPST, VNVV…VYML, and ILSI…PNSI.

It belongs to the complex I subunit 4 family.

Its subcellular location is the cell membrane. The catalysed reaction is a quinone + NADH + 5 H(+)(in) = a quinol + NAD(+) + 4 H(+)(out). In terms of biological role, NDH-1 shuttles electrons from NADH, via FMN and iron-sulfur (Fe-S) centers, to quinones in the respiratory chain. Couples the redox reaction to proton translocation (for every two electrons transferred, four hydrogen ions are translocated across the cytoplasmic membrane), and thus conserves the redox energy in a proton gradient. This Rickettsia typhi (strain ATCC VR-144 / Wilmington) protein is NADH-quinone oxidoreductase subunit M (nuoM).